A 192-amino-acid polypeptide reads, in one-letter code: VQ motif-containing protein 22 (192 aa).

Low complexity predominate over residues 24 to 38 (ASTAVTTTTAGDTTS). The segment at 24–65 (ASTAVTTTTAGDTTSIDSRLSPETGRVTKPTRRRSRASRRTP) is disordered. Residues 52 to 62 (KPTRRRSRASR) are compositionally biased toward basic residues. A VQ motif is present at residues 76–85 (FRAMVQQYTG). Disordered stretches follow at residues 101–135 (FSLTSSSDPSAGSSQQAPWQYNFQPHAPLQPPQRP) and 163–192 (FGTVDGSGGGGSAPSSKEATNSNSSSSRLQ). Composition is skewed to low complexity over residues 102-114 (SLTSSSDPSAGSS) and 175-192 (APSSKEATNSNSSSSRLQ).

Its subcellular location is the nucleus. Its function is as follows. May function as positive regulator of plant growth. This is VQ motif-containing protein 22 from Arabidopsis thaliana (Mouse-ear cress).